Consider the following 118-residue polypeptide: Small ribosomal subunit protein uS13 (118 aa).

The disordered stretch occupies residues 93-118 (RGLPVRGQRTKTNARTRKGPRKPIRK).

It belongs to the universal ribosomal protein uS13 family. As to quaternary structure, part of the 30S ribosomal subunit. Forms a loose heterodimer with protein S19. Forms two bridges to the 50S subunit in the 70S ribosome.

In terms of biological role, located at the top of the head of the 30S subunit, it contacts several helices of the 16S rRNA. In the 70S ribosome it contacts the 23S rRNA (bridge B1a) and protein L5 of the 50S subunit (bridge B1b), connecting the 2 subunits; these bridges are implicated in subunit movement. Contacts the tRNAs in the A and P-sites. In Azotobacter vinelandii (strain DJ / ATCC BAA-1303), this protein is Small ribosomal subunit protein uS13.